Reading from the N-terminus, the 309-residue chain is NADH-cytochrome b5 reductase 2 (309 aa).

The helical transmembrane segment at 3-23 threads the bilayer; that stretch reads ILTAPVLIGVSIVVITVLYLF. The 113-residue stretch at 48 to 160 folds into the FAD-binding FR-type domain; sequence SVKYPLPLIE…RGPNGLLVYN (113 aa). FAD is bound by residues 140–170 and 179–214; these read DNMK…IRPD and KFKH…VCSL.

This sequence belongs to the flavoprotein pyridine nucleotide cytochrome reductase family. It depends on FAD as a cofactor.

Its subcellular location is the membrane. The catalysed reaction is 2 Fe(III)-[cytochrome b5] + NADH = 2 Fe(II)-[cytochrome b5] + NAD(+) + H(+). NADH-cytochrome b5 reductases are involved in desaturation and elongation of fatty acids, cholesterol biosynthesis and drug metabolism. This Danio rerio (Zebrafish) protein is NADH-cytochrome b5 reductase 2 (cyb5r2).